A 403-amino-acid polypeptide reads, in one-letter code: Acetate kinase (403 aa).

Asparagine 8 contributes to the Mg(2+) binding site. An ATP-binding site is contributed by lysine 15. Arginine 90 is a substrate binding site. Aspartate 147 acts as the Proton donor/acceptor in catalysis. ATP-binding positions include histidine 207–glycine 211, aspartate 282–arginine 284, and glycine 330–asparagine 334. Position 384 (glutamate 384) interacts with Mg(2+).

This sequence belongs to the acetokinase family. Homodimer. Requires Mg(2+) as cofactor. Mn(2+) is required as a cofactor.

It is found in the cytoplasm. The catalysed reaction is acetate + ATP = acetyl phosphate + ADP. The protein operates within metabolic intermediate biosynthesis; acetyl-CoA biosynthesis; acetyl-CoA from acetate: step 1/2. Functionally, catalyzes the formation of acetyl phosphate from acetate and ATP. Can also catalyze the reverse reaction. The polypeptide is Acetate kinase (Exiguobacterium sibiricum (strain DSM 17290 / CCUG 55495 / CIP 109462 / JCM 13490 / 255-15)).